The sequence spans 842 residues: 9-beta-pimara-7,15-diene synthase, chloroplastic (842 aa).

A chloroplast-targeting transit peptide spans Met1 to Cys56. Asp591, Asp595, Asn735, Ser739, and Glu743 together coordinate Mg(2+). Positions Asp591–Asp595 match the DDXXD motif motif.

Belongs to the terpene synthase family. Mg(2+) is required as a cofactor. Expressed in roots.

It localises to the plastid. Its subcellular location is the chloroplast. The catalysed reaction is 9alpha-copalyl diphosphate = 9beta-pimara-7,15-diene + diphosphate. Involved in the biosynthesis of momilactone A and B phytoalexins. Catalyzes the conversion of syn-copalyl diphosphate to the phytoalexin precursor syn-pimara-7,15-diene. This chain is 9-beta-pimara-7,15-diene synthase, chloroplastic, found in Oryza sativa subsp. japonica (Rice).